A 161-amino-acid polypeptide reads, in one-letter code: Protein-export protein SecB (161 aa).

This sequence belongs to the SecB family. As to quaternary structure, homotetramer, a dimer of dimers. One homotetramer interacts with 1 SecA dimer.

The protein resides in the cytoplasm. One of the proteins required for the normal export of preproteins out of the cell cytoplasm. It is a molecular chaperone that binds to a subset of precursor proteins, maintaining them in a translocation-competent state. It also specifically binds to its receptor SecA. This Coxiella burnetii (strain Dugway 5J108-111) protein is Protein-export protein SecB.